The sequence spans 233 residues: tRNA (guanine-N(7)-)-methyltransferase (233 aa).

The disordered stretch occupies residues 1–22 (MIDENHPMRAAGNFFGRRHGKP). S-adenosyl-L-methionine is bound by residues Glu-64, Glu-89, Asp-116, and Asp-138. Residue Asp-138 is part of the active site. Residues Lys-142, Asp-174, and 212–215 (TRYE) contribute to the substrate site.

Belongs to the class I-like SAM-binding methyltransferase superfamily. TrmB family.

It carries out the reaction guanosine(46) in tRNA + S-adenosyl-L-methionine = N(7)-methylguanosine(46) in tRNA + S-adenosyl-L-homocysteine. The protein operates within tRNA modification; N(7)-methylguanine-tRNA biosynthesis. Functionally, catalyzes the formation of N(7)-methylguanine at position 46 (m7G46) in tRNA. The polypeptide is tRNA (guanine-N(7)-)-methyltransferase (Brucella melitensis biotype 1 (strain ATCC 23456 / CCUG 17765 / NCTC 10094 / 16M)).